A 273-amino-acid polypeptide reads, in one-letter code: 2,3,4,5-tetrahydropyridine-2,6-dicarboxylate N-succinyltransferase (273 aa).

Residues Arg-104 and Asp-141 each coordinate substrate.

The protein belongs to the transferase hexapeptide repeat family. In terms of assembly, homotrimer.

It is found in the cytoplasm. It carries out the reaction (S)-2,3,4,5-tetrahydrodipicolinate + succinyl-CoA + H2O = (S)-2-succinylamino-6-oxoheptanedioate + CoA. The protein operates within amino-acid biosynthesis; L-lysine biosynthesis via DAP pathway; LL-2,6-diaminopimelate from (S)-tetrahydrodipicolinate (succinylase route): step 1/3. The chain is 2,3,4,5-tetrahydropyridine-2,6-dicarboxylate N-succinyltransferase from Azoarcus sp. (strain BH72).